We begin with the raw amino-acid sequence, 201 residues long: Osmotically-inducible protein Y (201 aa).

A signal peptide spans 1-28 (MTMTRLKISKTLLAVMLTSAVATGSAYA). 2 consecutive BON domains span residues 55-123 (DDSA…HVRD) and 134-201 (GDTA…LKTK).

The protein localises to the periplasm. This is Osmotically-inducible protein Y (osmY) from Escherichia coli (strain K12).